The primary structure comprises 979 residues: Zinc finger protein 280D (979 aa).

Residues Lys-32, Lys-34, Lys-74, and Lys-87 each participate in a glycyl lysine isopeptide (Lys-Gly) (interchain with G-Cter in SUMO2) cross-link. Polar residues predominate over residues 89-101; the sequence is TSQHYTNPTSNPV. Residues 89–119 form a disordered region; sequence TSQHYTNPTSNPVPASPINFHPESRSSDSSV. Ser-104 carries the post-translational modification Phosphoserine. Residues Lys-126 and Lys-140 each participate in a glycyl lysine isopeptide (Lys-Gly) (interchain with G-Cter in SUMO2) cross-link. Residues 157-236 form a disordered region; it reads YQGGPTLSMA…TSSNQSKNGT (80 aa). Over residues 169 to 187 the composition is skewed to polar residues; the sequence is SESSFLSKRPSTSEVNNVN. Residues Lys-189, Lys-210, Lys-223, Lys-233, Lys-275, Lys-284, and Lys-292 each participate in a glycyl lysine isopeptide (Lys-Gly) (interchain with G-Cter in SUMO2) cross-link. The span at 195–235 shows a compositional bias: polar residues; the sequence is ESVSGANSSAVLPSVKSPSVTSSQAMLAKGTNTSSNQSKNG. 2 C2H2-type zinc fingers span residues 321–343 and 358–381; these read FKCF…MKHH and TTCQ…ESTH. A C2H2-type 3; degenerate zinc finger spans residues 388–412; sequence TICKICELSFETEHVLLQHMKDNHK. 2 consecutive C2H2-type zinc fingers follow at residues 418 to 441 and 449 to 469; these read YVCQ…RTSH and CPFC…YMKH. 3 disordered regions span residues 523–608, 739–809, and 896–979; these read GPLQ…NKKS, LKKE…SDKE, and FLRK…KERS. A compositionally biased stretch (low complexity) spans 527–541; sequence SGASPTPSISASAST. Composition is skewed to polar residues over residues 542 to 584 and 592 to 608; these read LQLS…NGSK and SNMQ…NKKS. Phosphoserine is present on Ser-545. Lys-550 participates in a covalent cross-link: Glycyl lysine isopeptide (Lys-Gly) (interchain with G-Cter in SUMO2). Over residues 739-784 the composition is skewed to basic and acidic residues; the sequence is LKKEAPAKEQEPVSKEIARPNMAERETETSNSESKQDKAASSKEKN. Lys-740 participates in a covalent cross-link: Glycyl lysine isopeptide (Lys-Gly) (interchain with G-Cter in SUMO2). A compositionally biased stretch (polar residues) spans 786–797; that stretch reads CNANSFEGSSTT. Residues 798 to 809 show a composition bias toward basic and acidic residues; the sequence is KSEESITVSDKE. Polar residues predominate over residues 905–914; it reads SVSSDVSEQG. Phosphoserine is present on residues Ser-908 and Ser-911. Residues 970–979 are compositionally biased toward acidic residues; sequence VDLEDEKERS. Residue Lys-976 forms a Glycyl lysine isopeptide (Lys-Gly) (interchain with G-Cter in SUMO2) linkage.

It localises to the nucleus. May function as a transcription factor. The sequence is that of Zinc finger protein 280D (ZNF280D) from Homo sapiens (Human).